A 204-amino-acid polypeptide reads, in one-letter code: FMN-dependent NADH:quinone oxidoreductase (204 aa).

FMN contacts are provided by residues Ser10 and 16–18 (SKS).

Belongs to the azoreductase type 1 family. In terms of assembly, homodimer. FMN is required as a cofactor.

It carries out the reaction 2 a quinone + NADH + H(+) = 2 a 1,4-benzosemiquinone + NAD(+). The catalysed reaction is N,N-dimethyl-1,4-phenylenediamine + anthranilate + 2 NAD(+) = 2-(4-dimethylaminophenyl)diazenylbenzoate + 2 NADH + 2 H(+). In terms of biological role, quinone reductase that provides resistance to thiol-specific stress caused by electrophilic quinones. Its function is as follows. Also exhibits azoreductase activity. Catalyzes the reductive cleavage of the azo bond in aromatic azo compounds to the corresponding amines. This chain is FMN-dependent NADH:quinone oxidoreductase, found in Ruegeria pomeroyi (strain ATCC 700808 / DSM 15171 / DSS-3) (Silicibacter pomeroyi).